The chain runs to 347 residues: Phosphoribosylformylglycinamidine cyclo-ligase (347 aa).

This sequence belongs to the AIR synthase family.

The protein localises to the cytoplasm. It catalyses the reaction 2-formamido-N(1)-(5-O-phospho-beta-D-ribosyl)acetamidine + ATP = 5-amino-1-(5-phospho-beta-D-ribosyl)imidazole + ADP + phosphate + H(+). It participates in purine metabolism; IMP biosynthesis via de novo pathway; 5-amino-1-(5-phospho-D-ribosyl)imidazole from N(2)-formyl-N(1)-(5-phospho-D-ribosyl)glycinamide: step 2/2. The protein is Phosphoribosylformylglycinamidine cyclo-ligase of Yersinia pseudotuberculosis serotype O:1b (strain IP 31758).